Reading from the N-terminus, the 196-residue chain is Probable malonic semialdehyde reductase RutE (196 aa).

The protein belongs to the nitroreductase family. HadB/RutE subfamily. Requires FMN as cofactor.

The catalysed reaction is 3-hydroxypropanoate + NADP(+) = 3-oxopropanoate + NADPH + H(+). May reduce toxic product malonic semialdehyde to 3-hydroxypropionic acid, which is excreted. This Escherichia coli O6:H1 (strain CFT073 / ATCC 700928 / UPEC) protein is Probable malonic semialdehyde reductase RutE.